A 457-amino-acid chain; its full sequence is Cystathionine beta-lyase (457 aa).

Positions 1-41 are disordered; the sequence is MSTPNSDSPAAQAAKKVFSRLDLDGHNLPPSPAPSSPHNGR.

Belongs to the trans-sulfuration enzymes family. Requires pyridoxal 5'-phosphate as cofactor.

The protein resides in the cytoplasm. It is found in the nucleus. It catalyses the reaction L,L-cystathionine + H2O = L-homocysteine + pyruvate + NH4(+). The catalysed reaction is an S-substituted L-cysteine + H2O = a thiol + pyruvate + NH4(+). It participates in amino-acid biosynthesis; L-methionine biosynthesis via de novo pathway; L-homocysteine from L-cystathionine: step 1/1. Its function is as follows. Involved in de novo synthesis of methionine. The chain is Cystathionine beta-lyase (met-2) from Neurospora crassa (strain ATCC 24698 / 74-OR23-1A / CBS 708.71 / DSM 1257 / FGSC 987).